The primary structure comprises 101 residues: Small ribosomal subunit protein uS10 (101 aa).

Belongs to the universal ribosomal protein uS10 family. Part of the 30S ribosomal subunit.

Its function is as follows. Involved in the binding of tRNA to the ribosomes. The chain is Small ribosomal subunit protein uS10 from Mycoplasmopsis synoviae (strain 53) (Mycoplasma synoviae).